Consider the following 101-residue polypeptide: Putative RNA-binding protein RbpA (101 aa).

One can recognise an RRM domain in the interval 2–79 (SIYVGNLSYD…RDLKVNKAKP (78 aa)). Over residues 73 to 83 (KVNKAKPRENR) the composition is skewed to basic and acidic residues. A disordered region spans residues 73–101 (KVNKAKPRENRSGGGSFGGGRKSYGGSRY). Gly residues predominate over residues 84 to 101 (SGGGSFGGGRKSYGGSRY).

This Synechocystis sp. (strain ATCC 27184 / PCC 6803 / Kazusa) protein is Putative RNA-binding protein RbpA (rbpA).